The following is a 99-amino-acid chain: Fetal and adult testis-expressed transcript protein homolog (99 aa).

Residues 79 to 98 form a helical membrane-spanning segment; it reads AALFTLLVSVCIANLWLWVH.

As to quaternary structure, interacts with BIK and RNF183. Interacts with IMMT/MIC60and EMD.

It is found in the mitochondrion. Its subcellular location is the mitochondrion outer membrane. The protein resides in the endoplasmic reticulum membrane. Involved in the regulation of endoplasmic reticulum (ER)-mitochondria coupling. Negatively regulates the ER-mitochondria distance and Ca(2+) transfer from ER to mitochondria possibly implicating it in the regulation of apoptosis. May collaborate with RNF183 to restrain BIK protein levels thus regulating apoptotic signaling. This Mus musculus (Mouse) protein is Fetal and adult testis-expressed transcript protein homolog (Fate1).